The following is a 714-amino-acid chain: Structure-specific endonuclease subunit SLX4 1 (714 aa).

Composition is skewed to basic and acidic residues over residues 1-14 (MSPE…EDNL) and 24-34 (IHEETLAEESH). 2 disordered regions span residues 1–116 (MSPE…QGSI) and 337–369 (DSSG…KTPQ). Residues 36–46 (QSIQRSISRLS) show a composition bias toward low complexity. Basic residues predominate over residues 79–92 (KTKKRKLKVSKPRK).

It belongs to the SLX4 family. As to quaternary structure, forms a heterodimer with SLX1. Phosphorylated in response to DNA damage.

Its subcellular location is the nucleus. Its function is as follows. Regulatory subunit of the SLX1-SLX4 structure-specific endonuclease that resolves DNA secondary structures generated during DNA repair and recombination. Has endonuclease activity towards branched DNA substrates, introducing single-strand cuts in duplex DNA close to junctions with ss-DNA. In Candida tropicalis (strain ATCC MYA-3404 / T1) (Yeast), this protein is Structure-specific endonuclease subunit SLX4 1.